A 96-amino-acid polypeptide reads, in one-letter code: Glutamyl-tRNA(Gln) amidotransferase subunit C (96 aa).

It belongs to the GatC family. Heterotrimer of A, B and C subunits.

It catalyses the reaction L-glutamyl-tRNA(Gln) + L-glutamine + ATP + H2O = L-glutaminyl-tRNA(Gln) + L-glutamate + ADP + phosphate + H(+). The enzyme catalyses L-aspartyl-tRNA(Asn) + L-glutamine + ATP + H2O = L-asparaginyl-tRNA(Asn) + L-glutamate + ADP + phosphate + 2 H(+). Its function is as follows. Allows the formation of correctly charged Asn-tRNA(Asn) or Gln-tRNA(Gln) through the transamidation of misacylated Asp-tRNA(Asn) or Glu-tRNA(Gln) in organisms which lack either or both of asparaginyl-tRNA or glutaminyl-tRNA synthetases. The reaction takes place in the presence of glutamine and ATP through an activated phospho-Asp-tRNA(Asn) or phospho-Glu-tRNA(Gln). The chain is Glutamyl-tRNA(Gln) amidotransferase subunit C from Neisseria meningitidis serogroup A / serotype 4A (strain DSM 15465 / Z2491).